The chain runs to 179 residues: uncharacterized protein (179 aa).

This is an uncharacterized protein from Methanocaldococcus jannaschii (strain ATCC 43067 / DSM 2661 / JAL-1 / JCM 10045 / NBRC 100440) (Methanococcus jannaschii).